We begin with the raw amino-acid sequence, 359 residues long: MAIRVLIMAGGTGGHIFPALAVADRLRAWGVEVVWMGTRHGLEAELVPKAGYPIEWISIGGLRGKGLTHWLRAPFKLLLALSQALRALRRWQPAVVLGLGGFVSGPGGLGAWLLRRPLLIHEQNAIVGTANRLLAPLAGRVMEAFPGTFPPARKAEWTGNPVRESIEQLSESRARLQARQGCFHLLVLGGSQGARILNETVPQALALLPTKVRPQVWHQCGSRQWEGAVVAYRAAGVEARLVPFIDDMAAAYAWADLVVCRAGALTVAELMAAGIGALLVPFPLAIDDHQRANADYLVVAGAALLLPEKELSPSRLAQEIERLGADYSTFISMAQAARQLHRVGAAQRVAERCLEVASG.

UDP-N-acetyl-alpha-D-glucosamine contacts are provided by residues 12-14 (TGG), asparagine 124, arginine 163, serine 191, isoleucine 245, 264-269 (ALTVAE), and glutamine 290.

It belongs to the glycosyltransferase 28 family. MurG subfamily.

It is found in the cell inner membrane. The catalysed reaction is di-trans,octa-cis-undecaprenyl diphospho-N-acetyl-alpha-D-muramoyl-L-alanyl-D-glutamyl-meso-2,6-diaminopimeloyl-D-alanyl-D-alanine + UDP-N-acetyl-alpha-D-glucosamine = di-trans,octa-cis-undecaprenyl diphospho-[N-acetyl-alpha-D-glucosaminyl-(1-&gt;4)]-N-acetyl-alpha-D-muramoyl-L-alanyl-D-glutamyl-meso-2,6-diaminopimeloyl-D-alanyl-D-alanine + UDP + H(+). It functions in the pathway cell wall biogenesis; peptidoglycan biosynthesis. Cell wall formation. Catalyzes the transfer of a GlcNAc subunit on undecaprenyl-pyrophosphoryl-MurNAc-pentapeptide (lipid intermediate I) to form undecaprenyl-pyrophosphoryl-MurNAc-(pentapeptide)GlcNAc (lipid intermediate II). The polypeptide is UDP-N-acetylglucosamine--N-acetylmuramyl-(pentapeptide) pyrophosphoryl-undecaprenol N-acetylglucosamine transferase (Nitrosococcus oceani (strain ATCC 19707 / BCRC 17464 / JCM 30415 / NCIMB 11848 / C-107)).